The chain runs to 308 residues: uncharacterized protein (308 aa).

The first 19 residues, 1 to 19 (MKLLLILILIINNYNLCLS), serve as a signal peptide directing secretion. N-linked (GlcNAc...) asparagine glycosylation is found at asparagine 25 and asparagine 300.

Its subcellular location is the secreted. This is an uncharacterized protein from Dictyostelium discoideum (Social amoeba).